Here is a 513-residue protein sequence, read N- to C-terminus: ATP synthase subunit alpha 1 (513 aa).

Residue 169-176 (GDRQCGKT) coordinates ATP.

Belongs to the ATPase alpha/beta chains family. In terms of assembly, F-type ATPases have 2 components, CF(1) - the catalytic core - and CF(0) - the membrane proton channel. CF(1) has five subunits: alpha(3), beta(3), gamma(1), delta(1), epsilon(1). CF(0) has three main subunits: a(1), b(2) and c(9-12). The alpha and beta chains form an alternating ring which encloses part of the gamma chain. CF(1) is attached to CF(0) by a central stalk formed by the gamma and epsilon chains, while a peripheral stalk is formed by the delta and b chains.

It localises to the cell inner membrane. The enzyme catalyses ATP + H2O + 4 H(+)(in) = ADP + phosphate + 5 H(+)(out). In terms of biological role, produces ATP from ADP in the presence of a proton gradient across the membrane. The alpha chain is a regulatory subunit. The chain is ATP synthase subunit alpha 1 from Burkholderia thailandensis (strain ATCC 700388 / DSM 13276 / CCUG 48851 / CIP 106301 / E264).